We begin with the raw amino-acid sequence, 243 residues long: Tetraspanin-36 (243 aa).

At 1-9 (MDCGIITSK) the chain is on the cytoplasmic side. Residues 10 to 30 (TILLLLSLIFWAAGAALAYVG) form a helical membrane-spanning segment. Over 31–49 (SYVIKSYNNFEDFMSDRHT) the chain is Lumenal. Residues 50–70 (LIPAAIIIGVAVVMFIIGFVG) traverse the membrane as a helical segment. Topologically, residues 71–84 (CCATLRESKVGLGL) are cytoplasmic. The chain crosses the membrane as a helical span at residues 85-105 (FLIIIMLIFAAEVTAFVFGII). Residues 106-208 (YRGRIRGDLE…QVLQDVLSYA (103 aa)) lie on the Lumenal side of the membrane. Asn149, Asn163, and Asn174 each carry an N-linked (GlcNAc...) asparagine glycan. The chain crosses the membrane as a helical span at residues 209–229 (MLVILGFAIIKFFGMLSVCVI). The Cytoplasmic portion of the chain corresponds to 230–243 (TCKSKKNEYQPLYA).

It belongs to the tetraspanin (TM4SF) family. Post-translationally, N-glycosylated. In terms of tissue distribution, strongly expressed in melanophores and xanthophores. Also detected in eye, brain, heart, skin, fin, testis and ovary.

It localises to the golgi apparatus membrane. The protein localises to the endoplasmic reticulum membrane. Functionally, plays a role in migration and segregation of pigment cells (melanophores and xanthophores). Contributes to pigment stripe patterning in the epidermis. This is Tetraspanin-36 from Danio rerio (Zebrafish).